The following is a 262-amino-acid chain: Tropinone reductase homolog At2g29310 (262 aa).

Position 13 to 37 (13 to 37 (LVTGAASGIGYAIVEELASFGAIIH)) interacts with NADP(+). S146 is a substrate binding site. The active-site Proton acceptor is the Y159.

This sequence belongs to the short-chain dehydrogenases/reductases (SDR) family. SDR65C subfamily.

The sequence is that of Tropinone reductase homolog At2g29310 from Arabidopsis thaliana (Mouse-ear cress).